The chain runs to 69 residues: Fumarase D (69 aa).

This sequence belongs to the FumD family.

It carries out the reaction (S)-malate = fumarate + H2O. Its function is as follows. In vitro catalyzes the addition of water to fumarate, forming malate. Cannot catalyze the reverse reaction. Cannot use the cis-isomer maleate as substrate. The sequence is that of Fumarase D from Shigella flexneri.